Reading from the N-terminus, the 214-residue chain is Probable nicotinate-nucleotide adenylyltransferase (214 aa).

This sequence belongs to the NadD family.

The enzyme catalyses nicotinate beta-D-ribonucleotide + ATP + H(+) = deamido-NAD(+) + diphosphate. Its pathway is cofactor biosynthesis; NAD(+) biosynthesis; deamido-NAD(+) from nicotinate D-ribonucleotide: step 1/1. Its function is as follows. Catalyzes the reversible adenylation of nicotinate mononucleotide (NaMN) to nicotinic acid adenine dinucleotide (NaAD). The polypeptide is Probable nicotinate-nucleotide adenylyltransferase (Psychromonas ingrahamii (strain DSM 17664 / CCUG 51855 / 37)).